The primary structure comprises 76 residues: Putative protein StbC (76 aa).

This chain is Putative protein StbC (stbC), found in Escherichia coli.